The following is a 709-amino-acid chain: Polyribonucleotide nucleotidyltransferase (709 aa).

2 residues coordinate Mg(2+): aspartate 485 and aspartate 491. The KH domain maps to 552 to 611; the sequence is PRIYTMKIDPKKIKDVIGKGGATIRSLTEETGTSIDIDDDGTVKIAAVDSNAAKNVMGRI. Residues 621–689 form the S1 motif domain; the sequence is GAIYKGKVTR…RQGRIRLTMK (69 aa).

Belongs to the polyribonucleotide nucleotidyltransferase family. As to quaternary structure, component of the RNA degradosome, which is a multiprotein complex involved in RNA processing and mRNA degradation. Mg(2+) is required as a cofactor.

It localises to the cytoplasm. The enzyme catalyses RNA(n+1) + phosphate = RNA(n) + a ribonucleoside 5'-diphosphate. Involved in mRNA degradation. Catalyzes the phosphorolysis of single-stranded polyribonucleotides processively in the 3'- to 5'-direction. This is Polyribonucleotide nucleotidyltransferase from Haemophilus influenzae (strain PittEE).